The chain runs to 393 residues: Ninja-family protein 1 (393 aa).

Disordered regions lie at residues 1–27 and 155–200; these read MEGFSRDLLCGIGKGDAPPPEKRPGQL and NDDW…KEMN. Residues 156-170 show a composition bias toward basic and acidic residues; it reads DDWKKRKEAQSLKRL.

The protein belongs to the Ninja family.

It localises to the nucleus. The chain is Ninja-family protein 1 from Zea mays (Maize).